Consider the following 320-residue polypeptide: Bifunctional protein FolD 2 (320 aa).

Residues Gly-173–Ser-175 and Ile-242 contribute to the NADP(+) site.

This sequence belongs to the tetrahydrofolate dehydrogenase/cyclohydrolase family. Homodimer.

The enzyme catalyses (6R)-5,10-methylene-5,6,7,8-tetrahydrofolate + NADP(+) = (6R)-5,10-methenyltetrahydrofolate + NADPH. The catalysed reaction is (6R)-5,10-methenyltetrahydrofolate + H2O = (6R)-10-formyltetrahydrofolate + H(+). The protein operates within one-carbon metabolism; tetrahydrofolate interconversion. Its function is as follows. Catalyzes the oxidation of 5,10-methylenetetrahydrofolate to 5,10-methenyltetrahydrofolate and then the hydrolysis of 5,10-methenyltetrahydrofolate to 10-formyltetrahydrofolate. The chain is Bifunctional protein FolD 2 from Rubrobacter xylanophilus (strain DSM 9941 / JCM 11954 / NBRC 16129 / PRD-1).